Here is a 458-residue protein sequence, read N- to C-terminus: Monomethylamine methyltransferase MtmB1 (458 aa).

Position 202 (Pyl-202) is a non-standard amino acid, pyrrolysine.

Belongs to the monomethylamine methyltransferase family. In terms of assembly, dimer of homotrimers. Can form a complex with MtmC (MtmC1 or MtmC2).

It carries out the reaction Co(I)-[methylamine-specific corrinoid protein] + methylamine + H(+) = methyl-Co(III)-[methylamine-specific corrinoid protein] + NH4(+). It functions in the pathway one-carbon metabolism; methanogenesis from methylamine. Catalyzes the transfer of the methyl group from monomethylamine to the corrinoid cofactor of MtmC (MtmC1 or MtmC2). This Methanosarcina barkeri protein is Monomethylamine methyltransferase MtmB1 (mtmB1).